The primary structure comprises 486 residues: Glycogen synthase (486 aa).

An ADP-alpha-D-glucose-binding site is contributed by K20.

It belongs to the glycosyltransferase 1 family. Bacterial/plant glycogen synthase subfamily.

The catalysed reaction is [(1-&gt;4)-alpha-D-glucosyl](n) + ADP-alpha-D-glucose = [(1-&gt;4)-alpha-D-glucosyl](n+1) + ADP + H(+). Its pathway is glycan biosynthesis; glycogen biosynthesis. Its function is as follows. Synthesizes alpha-1,4-glucan chains using ADP-glucose. The chain is Glycogen synthase from Aeromonas hydrophila subsp. hydrophila (strain ATCC 7966 / DSM 30187 / BCRC 13018 / CCUG 14551 / JCM 1027 / KCTC 2358 / NCIMB 9240 / NCTC 8049).